We begin with the raw amino-acid sequence, 374 residues long: Chaperone protein DnaJ (374 aa).

Residues 5–70 (DYYEVLGVER…NKRAAYDQYG (66 aa)) enclose the J domain. The segment at 133–211 (GTSVNIRVPT…CHGEGRVEEY (79 aa)) adopts a CR-type zinc-finger fold. Zn(2+)-binding residues include Cys146, Cys149, Cys163, Cys166, Cys185, Cys188, Cys199, and Cys202. CXXCXGXG motif repeat units lie at residues 146–153 (CKPCDGSG), 163–170 (CPTCGGIG), 185–192 (CPRCHGQG), and 199–206 (CDSCHGEG).

The protein belongs to the DnaJ family. In terms of assembly, homodimer. The cofactor is Zn(2+).

The protein resides in the cytoplasm. In terms of biological role, participates actively in the response to hyperosmotic and heat shock by preventing the aggregation of stress-denatured proteins and by disaggregating proteins, also in an autonomous, DnaK-independent fashion. Unfolded proteins bind initially to DnaJ; upon interaction with the DnaJ-bound protein, DnaK hydrolyzes its bound ATP, resulting in the formation of a stable complex. GrpE releases ADP from DnaK; ATP binding to DnaK triggers the release of the substrate protein, thus completing the reaction cycle. Several rounds of ATP-dependent interactions between DnaJ, DnaK and GrpE are required for fully efficient folding. Also involved, together with DnaK and GrpE, in the DNA replication of plasmids through activation of initiation proteins. In Pseudomonas fluorescens (strain SBW25), this protein is Chaperone protein DnaJ.